A 437-amino-acid polypeptide reads, in one-letter code: Nicotinate phosphoribosyltransferase (437 aa).

The residue at position 231 (His231) is a Phosphohistidine; by autocatalysis.

It belongs to the NAPRTase family. Transiently phosphorylated on a His residue during the reaction cycle. Phosphorylation strongly increases the affinity for substrates and increases the rate of nicotinate D-ribonucleotide production. Dephosphorylation regenerates the low-affinity form of the enzyme, leading to product release.

The catalysed reaction is nicotinate + 5-phospho-alpha-D-ribose 1-diphosphate + ATP + H2O = nicotinate beta-D-ribonucleotide + ADP + phosphate + diphosphate. It participates in cofactor biosynthesis; NAD(+) biosynthesis; nicotinate D-ribonucleotide from nicotinate: step 1/1. Its function is as follows. Catalyzes the synthesis of beta-nicotinate D-ribonucleotide from nicotinate and 5-phospho-D-ribose 1-phosphate at the expense of ATP. The chain is Nicotinate phosphoribosyltransferase from Vibrio vulnificus (strain YJ016).